We begin with the raw amino-acid sequence, 492 residues long: NADH-quinone oxidoreductase subunit N (492 aa).

14 helical membrane-spanning segments follow: residues 5 to 25, 37 to 57, 72 to 92, 104 to 124, 129 to 149, 164 to 184, 205 to 225, 239 to 259, 276 to 295, 302 to 322, 337 to 357, 380 to 400, 414 to 434, and 466 to 486; these read PMTALLPDALVMAAIVVAWLI, TYFIALLSTVVAGIWFAIDAL, VVDPFASVMKAVVSLGYAVSI, LYEGNFFLLGMFSLLGQLVMI, FLTLYLGLELMSLSLYAAIAL, YVLGALASGFLLYGISMLYGA, VVLLFGVIFIVAGVAFKMGAV, PTAMTLIVGGGPKVAAFAWGL, MLVILAALSLIVGNITGIVQ, LAYSAISNMGFVLLGLLAGVV, MFYSIVYLITTLGSFGVVMLL, FAFVMMVMMFSLAGIPPAVGF, GLTWLAVLAVITSLFGAFYYL, and VAVLVLGIVPGPLMSICLNAI.

It belongs to the complex I subunit 2 family. NDH-1 is composed of 14 different subunits. Subunits NuoA, H, J, K, L, M, N constitute the membrane sector of the complex.

The protein resides in the cell inner membrane. It catalyses the reaction a quinone + NADH + 5 H(+)(in) = a quinol + NAD(+) + 4 H(+)(out). Functionally, NDH-1 shuttles electrons from NADH, via FMN and iron-sulfur (Fe-S) centers, to quinones in the respiratory chain. The immediate electron acceptor for the enzyme in this species is believed to be ubiquinone. Couples the redox reaction to proton translocation (for every two electrons transferred, four hydrogen ions are translocated across the cytoplasmic membrane), and thus conserves the redox energy in a proton gradient. This chain is NADH-quinone oxidoreductase subunit N, found in Paraburkholderia phymatum (strain DSM 17167 / CIP 108236 / LMG 21445 / STM815) (Burkholderia phymatum).